The primary structure comprises 691 residues: Threonine--tRNA ligase (691 aa).

Residues 1–66 (MSAPARPAPA…DADVDVIPVT (66 aa)) form the TGS domain. A catalytic region spans residues 265-571 (DHRKLGVELD…LTEHYAGAFP (307 aa)). Residues Cys370, His421, and His548 each contribute to the Zn(2+) site.

It belongs to the class-II aminoacyl-tRNA synthetase family. As to quaternary structure, homodimer. Zn(2+) is required as a cofactor.

It localises to the cytoplasm. It catalyses the reaction tRNA(Thr) + L-threonine + ATP = L-threonyl-tRNA(Thr) + AMP + diphosphate + H(+). Its function is as follows. Catalyzes the attachment of threonine to tRNA(Thr) in a two-step reaction: L-threonine is first activated by ATP to form Thr-AMP and then transferred to the acceptor end of tRNA(Thr). Also edits incorrectly charged L-seryl-tRNA(Thr). In Mycolicibacterium vanbaalenii (strain DSM 7251 / JCM 13017 / BCRC 16820 / KCTC 9966 / NRRL B-24157 / PYR-1) (Mycobacterium vanbaalenii), this protein is Threonine--tRNA ligase.